Here is a 187-residue protein sequence, read N- to C-terminus: Ribosome-recycling factor (187 aa).

Belongs to the RRF family.

It is found in the cytoplasm. Its function is as follows. Responsible for the release of ribosomes from messenger RNA at the termination of protein biosynthesis. May increase the efficiency of translation by recycling ribosomes from one round of translation to another. In Orientia tsutsugamushi (strain Ikeda) (Rickettsia tsutsugamushi), this protein is Ribosome-recycling factor.